Here is a 509-residue protein sequence, read N- to C-terminus: Maturase K (509 aa).

Belongs to the intron maturase 2 family. MatK subfamily.

Its subcellular location is the plastid. The protein localises to the chloroplast. Its function is as follows. Usually encoded in the trnK tRNA gene intron. Probably assists in splicing its own and other chloroplast group II introns. This chain is Maturase K, found in Abies firma (Momi fir).